A 591-amino-acid polypeptide reads, in one-letter code: Aspartate--tRNA(Asp/Asn) ligase (591 aa).

E174 contributes to the L-aspartate binding site. An aspartate region spans residues Q198–K201. L-aspartate is bound at residue R220. Residues R220–E222 and Q229 each bind ATP. L-aspartate is bound at residue H450. Residue E483 participates in ATP binding. R490 contributes to the L-aspartate binding site. G535–R538 contacts ATP.

This sequence belongs to the class-II aminoacyl-tRNA synthetase family. Type 1 subfamily. In terms of assembly, homodimer.

The protein resides in the cytoplasm. It catalyses the reaction tRNA(Asx) + L-aspartate + ATP = L-aspartyl-tRNA(Asx) + AMP + diphosphate. Its function is as follows. Aspartyl-tRNA synthetase with relaxed tRNA specificity since it is able to aspartylate not only its cognate tRNA(Asp) but also tRNA(Asn). Reaction proceeds in two steps: L-aspartate is first activated by ATP to form Asp-AMP and then transferred to the acceptor end of tRNA(Asp/Asn). The protein is Aspartate--tRNA(Asp/Asn) ligase of Pseudomonas fluorescens (strain ATCC BAA-477 / NRRL B-23932 / Pf-5).